Reading from the N-terminus, the 1774-residue chain is U3 small nucleolar RNA-associated protein 10 (1774 aa).

The disordered stretch occupies residues 1206–1226; it reads YDKHSSAGSNDEEAGSESEAE. Residues 1215-1226 are compositionally biased toward acidic residues; the sequence is NDEEAGSESEAE. The HEAT repeat unit spans residues 1734–1772; the sequence is LVPIIAELLEDEDEEVEYEVRSGLVKVVESVMGEPFDRY.

The protein belongs to the HEATR1/UTP10 family. Component of the ribosomal small subunit (SSU) processome.

It localises to the nucleus. It is found in the nucleolus. Functionally, involved in nucleolar processing of pre-18S ribosomal RNA. Involved in ribosome biosynthesis. The polypeptide is U3 small nucleolar RNA-associated protein 10 (Kluyveromyces lactis (strain ATCC 8585 / CBS 2359 / DSM 70799 / NBRC 1267 / NRRL Y-1140 / WM37) (Yeast)).